The sequence spans 431 residues: Histidine--tRNA ligase (431 aa).

It belongs to the class-II aminoacyl-tRNA synthetase family. As to quaternary structure, homodimer.

It is found in the cytoplasm. The catalysed reaction is tRNA(His) + L-histidine + ATP = L-histidyl-tRNA(His) + AMP + diphosphate + H(+). This is Histidine--tRNA ligase from Neisseria meningitidis serogroup C (strain 053442).